Here is a 116-residue protein sequence, read N- to C-terminus: MQARRQTLPQFIKCKQTKCKIKLATINSAKALFLEMPGKLLHNCNRKLINRTNCPTQIMNPAKNALNGKLSRIKIMNVHWITPNNTKKKQNVSISFSLGYFSIWAKYALLEVLKVS.

This is an uncharacterized protein from Saccharomyces cerevisiae (strain ATCC 204508 / S288c) (Baker's yeast).